Here is a 329-residue protein sequence, read N- to C-terminus: Biotin synthase (329 aa).

In terms of domain architecture, Radical SAM core spans 48–278 (FLGNGVDLCS…TKKIAVCGGR (231 aa)). [4Fe-4S] cluster-binding residues include C66, C70, and C73. S143 and C203 together coordinate [2Fe-2S] cluster.

The protein belongs to the radical SAM superfamily. Biotin synthase family. As to quaternary structure, homodimer. Requires [4Fe-4S] cluster as cofactor. The cofactor is [2Fe-2S] cluster.

The enzyme catalyses (4R,5S)-dethiobiotin + (sulfur carrier)-SH + 2 reduced [2Fe-2S]-[ferredoxin] + 2 S-adenosyl-L-methionine = (sulfur carrier)-H + biotin + 2 5'-deoxyadenosine + 2 L-methionine + 2 oxidized [2Fe-2S]-[ferredoxin]. Its pathway is cofactor biosynthesis; biotin biosynthesis; biotin from 7,8-diaminononanoate: step 2/2. Its function is as follows. Catalyzes the conversion of dethiobiotin (DTB) to biotin by the insertion of a sulfur atom into dethiobiotin via a radical-based mechanism. The sequence is that of Biotin synthase from Geobacter metallireducens (strain ATCC 53774 / DSM 7210 / GS-15).